Consider the following 619-residue polypeptide: Alpha-L-arabinofuranosidase C (619 aa).

An N-terminal signal peptide occupies residues 1–37 (MINHNKTPNILAKVFKRTCGLVSTGAALAILSQAASA). A CBM2 domain is found at 38 to 136 (ACTYTIDSEW…TVTGAACNSA (99 aa)). C39 and C133 are oxidised to a cystine. Positions 163 to 289 (LLQEAQAGFC…LPNIDSLSVV (127 aa)) constitute a CBM6 domain. Positions 300-319 (SVSSSSSVQSSSSSSSTPSQ) are disordered.

Belongs to the glycosyl hydrolase 62 family.

The protein resides in the secreted. It carries out the reaction Hydrolysis of terminal non-reducing alpha-L-arabinofuranoside residues in alpha-L-arabinosides.. The protein operates within glycan metabolism; hemicellulose degradation. Its function is as follows. Xylanase C contributes to hydrolyze hemicellulose, the major component of plant cell-walls. In Cellvibrio japonicus (strain Ueda107) (Pseudomonas fluorescens subsp. cellulosa), this protein is Alpha-L-arabinofuranosidase C (xynC).